The following is a 621-amino-acid chain: Chaperone protein HtpG (621 aa).

The tract at residues 1–328 is a; substrate-binding; that stretch reads MTQEKKKFDA…SEDLPLNISR (328 aa). A b region spans residues 329–544; sequence ESLQHNNVLE…DTAMDIRMER (216 aa). The segment at 545–621 is c; the sequence is FLIEQKQIAN…LNDILQKAIL (77 aa).

Belongs to the heat shock protein 90 family. As to quaternary structure, homodimer.

It is found in the cytoplasm. In terms of biological role, molecular chaperone. Has ATPase activity. This is Chaperone protein HtpG from Rickettsia prowazekii (strain Madrid E).